Here is a 94-residue protein sequence, read N- to C-terminus: Signal peptidase complex subunit 1 (94 aa).

N-acetylserine is present on Ser-2. At 2–28 (SEILQDVQRKLVFPIDFPSQRKTEKFQ) the chain is on the cytoplasmic side. Residues 29-49 (QLSLMIGALVACILGFAQQSL) form a helical membrane-spanning segment. Lys-50 is a topological domain (lumenal). The chain crosses the membrane as a helical span at residues 51-71 (VLLTAYGISCVITLICVLPAY). At 72–94 (PWYNKQKLRWAQPKIEINVDQYD) the chain is on the cytoplasmic side.

The protein belongs to the SPCS1 family. Component of the signal peptidase complex (SPC) composed of a catalytic subunit SEC11 and three accessory subunits SPC1, SPC2 and SPC3. The complex induces a local thinning of the ER membrane which is used to measure the length of the signal peptide (SP) h-region of protein substrates. This ensures the selectivity of the complex towards h-regions shorter than 18-20 amino acids. SPC associates with the translocon complex. Interacts with SBH1 and SEB2/SBH2.

Its subcellular location is the endoplasmic reticulum membrane. In terms of biological role, component of the signal peptidase complex (SPC) which catalyzes the cleavage of N-terminal signal sequences from nascent proteins as they are translocated into the lumen of the endoplasmic reticulum. Dispensable for SPC enzymatic activity. This chain is Signal peptidase complex subunit 1 (SPC1), found in Saccharomyces cerevisiae (strain ATCC 204508 / S288c) (Baker's yeast).